The primary structure comprises 157 residues: Protein Smg (157 aa).

It belongs to the Smg family.

The polypeptide is Protein Smg (Yersinia pseudotuberculosis serotype O:1b (strain IP 31758)).